A 239-amino-acid chain; its full sequence is Xyloglucan-specific endo-beta-1,4-glucanase A (239 aa).

The first 14 residues, 1-14 (MKLLALSLASLASA), serve as a signal peptide directing secretion. Asparagine 172 is a glycosylation site (N-linked (GlcNAc...) asparagine).

This sequence belongs to the glycosyl hydrolase 12 (cellulase H) family.

The protein resides in the secreted. It carries out the reaction xyloglucan + H2O = xyloglucan oligosaccharides.. Functionally, catalyzes endohydrolysis of 1,4-beta-D-glucosidic linkages in xyloglucan with retention of the beta-configuration of the glycosyl residues. Specific for xyloglucan and does not hydrolyze other cell wall components. Active against tamarind xyloglucan. The polypeptide is Xyloglucan-specific endo-beta-1,4-glucanase A (xgeA) (Emericella nidulans (strain FGSC A4 / ATCC 38163 / CBS 112.46 / NRRL 194 / M139) (Aspergillus nidulans)).